Reading from the N-terminus, the 200-residue chain is MLVIGLTGGIGSGKTSAANIFSALGAGVVDTDEIAHELTQSGGRSLPAIRRAFGEKYITPEGALNRKEMRNLVFNDTDARRKLEAILHPLIRDEVSRRVGLAQGPYLIIVVPLLLETGHYRGIVQRVLVVDCSEGAQISRATARSGMNEQAVRAIMVAQVSRDERLGQADDVIVNNADLPNLERQVRALHKKYMTLAQGS.

Positions 3-200 constitute a DPCK domain; sequence VIGLTGGIGS…KKYMTLAQGS (198 aa). 11–16 lines the ATP pocket; that stretch reads GSGKTS.

It belongs to the CoaE family.

The protein localises to the cytoplasm. The enzyme catalyses 3'-dephospho-CoA + ATP = ADP + CoA + H(+). It functions in the pathway cofactor biosynthesis; coenzyme A biosynthesis; CoA from (R)-pantothenate: step 5/5. Catalyzes the phosphorylation of the 3'-hydroxyl group of dephosphocoenzyme A to form coenzyme A. This chain is Dephospho-CoA kinase, found in Nitrosospira multiformis (strain ATCC 25196 / NCIMB 11849 / C 71).